The primary structure comprises 1518 residues: Putative cellulose synthase 3 (1518 aa).

The catalytic stretch occupies residues 1-731 (MYGTWFTTGK…EEKLEKQSFV (731 aa)). 3 consecutive transmembrane segments (helical) span residues 24–44 (PVWVPVVLGVVLMAFVGSVRI), 71–91 (ITVFLMMLSLLVSLRYIVWRL), and 105–125 (LAVLLLLAEAYALMTLCLSYF). Residues 144 to 237 (QWPSVDVFVP…FAVIFDCDHV (94 aa)) are catalytic subdomain A. Residues Asp-186 and Asp-330 contribute to the active site. The catalytic subdomain B stretch occupies residues 314–374 (EAVMGIGGFA…GQRVRWARGM (61 aa)). The next 5 helical transmembrane spans lie at 404-424 (FLFAIPRLTFLVSPLAFLFLG), 428-448 (IAASPLAISVYALPHIFHSVI), 465-485 (IYETSLALFLVRITIVTLLQP), 514-534 (ILAGVLCAALLRGVFGIVWQF), and 543-563 (FILNTLWVVISLIIVLASIAV). The region spanning 569-668 (QTRNAPRVSV…ERQVVSMVFG (100 aa)) is the PilZ domain. The interval 732-1518 (LKPVPRSARH…IARDDLTGEL (787 aa)) is cyclic di-GMP binding domain. Residues 765–785 (APSPDQSGVTAETPFGDSNTG) form a disordered region. Over residues 768 to 785 (PDQSGVTAETPFGDSNTG) the composition is skewed to polar residues. Residues 1481 to 1501 (ALYLAGLAGAGLAALGVWAWL) traverse the membrane as a helical segment.

It in the N-terminal section; belongs to the glycosyltransferase 2 family. The protein in the C-terminal section; belongs to the AcsB/BcsB family.

The protein localises to the cell inner membrane. It carries out the reaction [(1-&gt;4)-beta-D-glucosyl](n) + UDP-alpha-D-glucose = [(1-&gt;4)-beta-D-glucosyl](n+1) + UDP + H(+). It functions in the pathway glycan metabolism; bacterial cellulose biosynthesis. The chain is Putative cellulose synthase 3 (bcsABII-B) from Komagataeibacter xylinus (Gluconacetobacter xylinus).